The sequence spans 197 residues: Peptide deformylase (197 aa).

Fe cation-binding residues include C106 and H148. Residue E149 is part of the active site. H152 is a Fe cation binding site.

It belongs to the polypeptide deformylase family. Fe(2+) is required as a cofactor.

It carries out the reaction N-terminal N-formyl-L-methionyl-[peptide] + H2O = N-terminal L-methionyl-[peptide] + formate. In terms of biological role, removes the formyl group from the N-terminal Met of newly synthesized proteins. Requires at least a dipeptide for an efficient rate of reaction. N-terminal L-methionine is a prerequisite for activity but the enzyme has broad specificity at other positions. The chain is Peptide deformylase from Mycolicibacterium smegmatis (strain ATCC 700084 / mc(2)155) (Mycobacterium smegmatis).